Here is a 300-residue protein sequence, read N- to C-terminus: ESX-5 secretion-associated protein EspG5 (300 aa).

This sequence belongs to the EspG family. As to quaternary structure, interacts specifically with ESX-5-dependent PE/PPE proteins. Binds PPE33 and PPE18. Does not interact with EsxN. Monomer in solution.

It is found in the cytoplasm. Its function is as follows. Specific chaperone for cognate PE/PPE proteins. Plays an important role in preventing aggregation of PE/PPE dimers. Required for LipY and PE31/PPE18 secretion. This chain is ESX-5 secretion-associated protein EspG5, found in Mycobacterium marinum (strain ATCC BAA-535 / M).